The primary structure comprises 1218 residues: Cytosolic carboxypeptidase 1 (1218 aa).

2 disordered regions span residues 476-512 (VVMKERASPKGEEAKEDPKGHDRTLPQQLGGQSRVAP) and 590-617 (TEDDEDTESHSSTEQAPSVEASDGPTLH). Basic and acidic residues predominate over residues 477-499 (VMKERASPKGEEAKEDPKGHDRT). The 291-residue stretch at 840 to 1130 (YPYTYSTLQM…KFCVGLLRLK (291 aa)) folds into the Peptidase M14 domain. Residues histidine 912, glutamate 915, and histidine 1009 each contribute to the Zn(2+) site. The active-site Proton donor/acceptor is glutamate 1094. Residue serine 1160 is modified to Phosphoserine. The segment at 1193-1218 (ENTGDYEPSAQEEALSDSEVSRTHLI) is disordered.

The protein belongs to the peptidase M14 family. As to quaternary structure, interacts with MYLK. It depends on Zn(2+) as a cofactor. In terms of tissue distribution, widely expressed. Highly expressed in the cerebellum and cortex of adult mouse brain. Expressed at similar levels in both the cerebellum and the cortex throughout all developmental stages. Also expressed in sciatic nerve transection, spinal motor neurons undergoing axon regeneration, testis, heart, eye, lung, pancreas, intestine, stomach, pituitary, spleen, adrenal, kidney and in developing brain. Expression in cranial motor nuclei is the same as that observed in uninjured primary motor neurons. Expression is prevalent in sensory neurons and hippocampal CA3 neurons in addition to regenerating motor neurons.

Its subcellular location is the cytoplasm. The protein resides in the cytosol. It localises to the nucleus. It is found in the mitochondrion. The catalysed reaction is (L-glutamyl)(n+1)-gamma-L-glutamyl-L-glutamyl-[protein] + H2O = (L-glutamyl)(n)-gamma-L-glutamyl-L-glutamyl-[protein] + L-glutamate. The enzyme catalyses C-terminal L-alpha-aminoacyl-L-glutamyl-L-glutamyl-[tubulin] + H2O = C-terminal L-alpha-aminoacyl-L-glutamyl-[tubulin] + L-glutamate. In terms of biological role, metallocarboxypeptidase that mediates protein deglutamylation of tubulin and non-tubulin target proteins. Catalyzes the removal of polyglutamate side chains present on the gamma-carboxyl group of glutamate residues within the C-terminal tail of alpha- and beta-tubulin. Specifically cleaves tubulin long-side-chains, while it is not able to remove the branching point glutamate. Also catalyzes the removal of polyglutamate residues from the carboxy-terminus of alpha-tubulin as well as non-tubulin proteins such as MYLK. Involved in KLF4 deglutamylation which promotes KLF4 proteasome-mediated degradation, thereby negatively regulating cell pluripotency maintenance and embryogenesis. This chain is Cytosolic carboxypeptidase 1, found in Mus musculus (Mouse).